Here is a 417-residue protein sequence, read N- to C-terminus: Serine hydroxymethyltransferase 2 (417 aa).

Residues Leu-121 and Gly-125–Leu-127 each bind (6S)-5,6,7,8-tetrahydrofolate. N6-(pyridoxal phosphate)lysine is present on Lys-229. Ser-354 to Phe-356 is a (6S)-5,6,7,8-tetrahydrofolate binding site.

It belongs to the SHMT family. As to quaternary structure, homodimer. Requires pyridoxal 5'-phosphate as cofactor.

The protein localises to the cytoplasm. The catalysed reaction is (6R)-5,10-methylene-5,6,7,8-tetrahydrofolate + glycine + H2O = (6S)-5,6,7,8-tetrahydrofolate + L-serine. It participates in one-carbon metabolism; tetrahydrofolate interconversion. Its pathway is amino-acid biosynthesis; glycine biosynthesis; glycine from L-serine: step 1/1. In terms of biological role, catalyzes the reversible interconversion of serine and glycine with tetrahydrofolate (THF) serving as the one-carbon carrier. This reaction serves as the major source of one-carbon groups required for the biosynthesis of purines, thymidylate, methionine, and other important biomolecules. Also exhibits THF-independent aldolase activity toward beta-hydroxyamino acids, producing glycine and aldehydes, via a retro-aldol mechanism. In Pseudomonas fluorescens (strain Pf0-1), this protein is Serine hydroxymethyltransferase 2.